Reading from the N-terminus, the 209-residue chain is uncharacterized protein (209 aa).

The disordered stretch occupies residues 177–209 (DNSDNSSDSDDSDSLDGSDDLNDSDNVDNLFVG). Residues 183–202 (SDSDDSDSLDGSDDLNDSDN) are compositionally biased toward acidic residues.

This is an uncharacterized protein from Acanthamoeba polyphaga (Amoeba).